Reading from the N-terminus, the 22-residue chain is 5-methyltetrahydropteroyltriglutamate--homocysteine methyltransferase (22 aa).

Belongs to the vitamin-B12 independent methionine synthase family. Zn(2+) serves as cofactor.

Its subcellular location is the cytoplasm. The enzyme catalyses 5-methyltetrahydropteroyltri-L-glutamate + L-homocysteine = tetrahydropteroyltri-L-glutamate + L-methionine. It functions in the pathway amino-acid biosynthesis; L-methionine biosynthesis via de novo pathway; L-methionine from L-homocysteine (MetE route): step 1/1. In terms of biological role, catalyzes the transfer of a methyl group from 5-methyltetrahydrofolate to homocysteine resulting in methionine formation. The sequence is that of 5-methyltetrahydropteroyltriglutamate--homocysteine methyltransferase from Pseudotsuga menziesii (Douglas-fir).